The sequence spans 132 residues: U10-hexatoxin-Hi1a (132 aa).

The signal sequence occupies residues 1–20; that stretch reads MKGFIVFSLSLCLVFTVCLA. Positions 21-30 are excised as a propeptide; it reads EDELMKEAVR.

In terms of processing, contains 5 disulfide bonds. In terms of tissue distribution, expressed by the venom gland.

It localises to the secreted. Probable ion channel inhibitor. The protein is U10-hexatoxin-Hi1a of Hadronyche infensa (Fraser island funnel-web spider).